The sequence spans 619 residues: Chaperone protein DnaK (619 aa).

Threonine 175 is subject to Phosphothreonine; by autocatalysis. Residues 578–619 are disordered; the sequence is NGGAQGEGFDPNNMGGANAGTGAANSNDDNVVDADFEVQDDK. Positions 589–606 are enriched in low complexity; it reads NNMGGANAGTGAANSNDD. Positions 607–619 are enriched in acidic residues; that stretch reads NVVDADFEVQDDK.

It belongs to the heat shock protein 70 family.

Its function is as follows. Acts as a chaperone. The chain is Chaperone protein DnaK from Clostridium perfringens (strain SM101 / Type A).